Reading from the N-terminus, the 706-residue chain is Elongation factor G (706 aa).

The 277-residue stretch at leucine 15 to valine 291 folds into the tr-type G domain. GTP-binding positions include alanine 24–threonine 31, aspartate 91–histidine 95, and asparagine 145–aspartate 148.

Belongs to the TRAFAC class translation factor GTPase superfamily. Classic translation factor GTPase family. EF-G/EF-2 subfamily.

The protein resides in the cytoplasm. Functionally, catalyzes the GTP-dependent ribosomal translocation step during translation elongation. During this step, the ribosome changes from the pre-translocational (PRE) to the post-translocational (POST) state as the newly formed A-site-bound peptidyl-tRNA and P-site-bound deacylated tRNA move to the P and E sites, respectively. Catalyzes the coordinated movement of the two tRNA molecules, the mRNA and conformational changes in the ribosome. In Leptospira interrogans serogroup Icterohaemorrhagiae serovar copenhageni (strain Fiocruz L1-130), this protein is Elongation factor G.